We begin with the raw amino-acid sequence, 370 residues long: Peptidyl-prolyl cis-trans isomerase D (370 aa).

Phosphoserine is present on S5. A PPIase cyclophilin-type domain is found at 19 to 183; it reads FFDVDIGGER…KLCVIAECGE (165 aa). K171 is subject to N6-acetyllysine. The tract at residues 185–215 is chaperone activity; that stretch reads KEGDDWGIFPKDGSGDSHPDFPEDADVDLKD. The residue at position 198 (S198) is a Phosphoserine. The interval 214-370 is interaction with HSP90AB1; that stretch reads KDVDKILLIS…EKAAYAKMFA (157 aa). 3 TPR repeats span residues 223–256, 273–306, and 307–340; these read SEDL…VEGS, LSCV…DPSN, and TKAL…APED.

Belongs to the cyclophilin-type PPIase family. PPIase D subfamily. In terms of assembly, identified in ESR1 or NR3C1/GCR steroid receptor-chaperone complexes. Found in HSP90 chaperone complexes with kinase clients LCK or EIF2AK1. Two monomers associate with one HSP90 homodimer. Interacts with HSP90AA1. Interacts with HSP90AB1; PPID and FKBP4 compete for binding to HSP90AB1 and the interaction is mutually exclusive with the PPID:HSPA8 interaction. Interacts with HSPA8; PPID and STIP1 but not FKBP4 compete for binding to HSPA8 and the interaction is mutually exclusive with the PPID:HSP90AB1 interaction. Interacts with S100A1 and S100A2; the interactions dissociate the PPID:HSP90AA1 interaction. Interacts with S100A6. Interacts with MYB, ILF2, XRCC6, RACK1 and RPS3. Interacts with cytoplasmic dynein 1 intermediate chain (DYNC1I1 or DYNC1I2). Post-translationally, the N-terminus is blocked. As to expression, detected in heart, thymis and brain.

The protein localises to the cytoplasm. It is found in the nucleus. It localises to the nucleolus. The protein resides in the nucleoplasm. The catalysed reaction is [protein]-peptidylproline (omega=180) = [protein]-peptidylproline (omega=0). Less sensitive to inhibition by cyclosporin A than is CYP-18. In terms of biological role, PPIase that catalyzes the cis-trans isomerization of proline imidic peptide bonds in oligopeptides and may therefore assist protein folding. Proposed to act as a co-chaperone in HSP90 complexes such as in unligated steroid receptors heterocomplexes. Different co-chaperones seem to compete for association with HSP90 thus establishing distinct HSP90-co-chaperone-receptor complexes with the potential to exert tissue-specific receptor activity control. May have a preference for estrogen receptor complexes and is not found in glucocorticoid receptor complexes. May be involved in cytoplasmic dynein-dependent movement of the receptor from the cytoplasm to the nucleus. May regulate MYB by inhibiting its DNA-binding activity. Involved in regulation of AHR signaling by promoting the formation of the AHR:ARNT dimer; the function is independent of HSP90 but requires the chaperone activity. Involved in regulation of UV radiation-induced apoptosis. The sequence is that of Peptidyl-prolyl cis-trans isomerase D from Bos taurus (Bovine).